Reading from the N-terminus, the 183-residue chain is Caltractin ICL1f (183 aa).

The segment covering 1–19 (MARRGQQPPQQQQQAQPAQ) has biased composition (low complexity). The disordered stretch occupies residues 1–30 (MARRGQQPPQQQQQAQPAQKNQAGKFNPAE). 4 consecutive EF-hand domains span residues 39 to 74 (EEVL…LGFE), 75 to 110 (AKNQ…RISE), 112 to 147 (DSKA…LGET), and 148 to 183 (MDDS…KTFA). 10 residues coordinate Ca(2+): aspartate 52, aspartate 54, threonine 56, serine 58, glutamate 63, aspartate 88, aspartate 90, serine 92, glutamine 94, and glutamate 99.

The protein belongs to the centrin family. Monomer.

Its subcellular location is the cytoplasm. The protein localises to the cytoskeleton. In terms of biological role, plays a fundamental role in microtubule organizing center structure and function. Component of the infraciliary lattice (ICL) and the ciliary basal bodies. This Paramecium tetraurelia protein is Caltractin ICL1f (Icl1f).